The primary structure comprises 474 residues: Probable glycine dehydrogenase (decarboxylating) subunit 2 (474 aa).

K262 is subject to N6-(pyridoxal phosphate)lysine.

It belongs to the GcvP family. C-terminal subunit subfamily. In terms of assembly, the glycine cleavage system is composed of four proteins: P, T, L and H. In this organism, the P 'protein' is a heterodimer of two subunits. It depends on pyridoxal 5'-phosphate as a cofactor.

It carries out the reaction N(6)-[(R)-lipoyl]-L-lysyl-[glycine-cleavage complex H protein] + glycine + H(+) = N(6)-[(R)-S(8)-aminomethyldihydrolipoyl]-L-lysyl-[glycine-cleavage complex H protein] + CO2. In terms of biological role, the glycine cleavage system catalyzes the degradation of glycine. The P protein binds the alpha-amino group of glycine through its pyridoxal phosphate cofactor; CO(2) is released and the remaining methylamine moiety is then transferred to the lipoamide cofactor of the H protein. This Thermotoga maritima (strain ATCC 43589 / DSM 3109 / JCM 10099 / NBRC 100826 / MSB8) protein is Probable glycine dehydrogenase (decarboxylating) subunit 2.